We begin with the raw amino-acid sequence, 476 residues long: Cardiolipin synthase (476 aa).

2 helical membrane passes run 2–22 (HLFI…IIFI) and 31–51 (WAWI…YILF). PLD phosphodiesterase domains lie at 207–234 (INYR…GDEY) and 389–416 (EKGF…DIRS). Residues His-212, Lys-214, Asp-219, His-394, Lys-396, and Asp-401 contribute to the active site.

The protein belongs to the phospholipase D family. Cardiolipin synthase subfamily.

It localises to the cell membrane. The enzyme catalyses 2 a 1,2-diacyl-sn-glycero-3-phospho-(1'-sn-glycerol) = a cardiolipin + glycerol. In terms of biological role, catalyzes the reversible phosphatidyl group transfer from one phosphatidylglycerol molecule to another to form cardiolipin (CL) (diphosphatidylglycerol) and glycerol. The protein is Cardiolipin synthase (cls) of Clostridium perfringens (strain ATCC 13124 / DSM 756 / JCM 1290 / NCIMB 6125 / NCTC 8237 / Type A).